A 346-amino-acid polypeptide reads, in one-letter code: Phosphoribosylformylglycinamidine cyclo-ligase (346 aa).

The protein belongs to the AIR synthase family.

It is found in the cytoplasm. It carries out the reaction 2-formamido-N(1)-(5-O-phospho-beta-D-ribosyl)acetamidine + ATP = 5-amino-1-(5-phospho-beta-D-ribosyl)imidazole + ADP + phosphate + H(+). The protein operates within purine metabolism; IMP biosynthesis via de novo pathway; 5-amino-1-(5-phospho-D-ribosyl)imidazole from N(2)-formyl-N(1)-(5-phospho-D-ribosyl)glycinamide: step 2/2. This chain is Phosphoribosylformylglycinamidine cyclo-ligase, found in Bacillus cereus (strain AH187).